A 215-amino-acid polypeptide reads, in one-letter code: MRVRYKPWAEDYLKNHPDLVDMDGAHAGKMSEWFEKEQPIYIEIGSGMGQFITTLAAQYPEINFVSMEREKSVMYKVLDKTKEMGLKNLKMICNDAIELNEYFKDKEISRIYLNFSDPWPKKRHAKRRLTYHTYLALYKQILKDDGEIHFKTDNRGLFAFSIESMSQFGMYFTKMNLNLHDEDDEDNIVTEYEKKFSEKGSRIYRMEAKFHKCFE.

S-adenosyl-L-methionine contacts are provided by Glu43, Glu68, Asp95, and Asp117. Asp117 is a catalytic residue. Substrate is bound by residues Lys121, Asp153, and 190–193 (TEYE).

This sequence belongs to the class I-like SAM-binding methyltransferase superfamily. TrmB family.

It carries out the reaction guanosine(46) in tRNA + S-adenosyl-L-methionine = N(7)-methylguanosine(46) in tRNA + S-adenosyl-L-homocysteine. It participates in tRNA modification; N(7)-methylguanine-tRNA biosynthesis. Its function is as follows. Catalyzes the formation of N(7)-methylguanine at position 46 (m7G46) in tRNA. In Staphylococcus epidermidis (strain ATCC 35984 / DSM 28319 / BCRC 17069 / CCUG 31568 / BM 3577 / RP62A), this protein is tRNA (guanine-N(7)-)-methyltransferase.